Reading from the N-terminus, the 259-residue chain is Short-chain dehydrogenase chry4 (259 aa).

The NADP(+) site is built by arginine 37, aspartate 55, asparagine 81, tyrosine 154, lysine 158, valine 185, and threonine 187. The active-site Proton donor is the tyrosine 154. The Lowers pKa of active site Tyr role is filled by lysine 158.

This sequence belongs to the short-chain dehydrogenases/reductases (SDR) family.

Its pathway is pigment biosynthesis. Its function is as follows. Short-chain dehydrogenase; part of the gene cluster that mediates the biosynthesis of the yellow pigment chrysogine. Pyruvic acid and anthranilic acid are likely substrates for the nonribosomal peptide synthetase chry1/NRPS14, with pyruvic acid adenylated by the first A domain and anthranilic acid by the second. If pyruvic acid and anthranilic acid are merged and released from chry1/NRPS14 by hydrolysis, a subsequent amidation would lead to 2-pyruvoylaminobenzamide. This process is probably catalyzed by the amidotransferase chry2 using glutamine as amino donor. The dehydrogenase chry5 that has a terminal berberine bridge domain for C-N cyclization could catalyze the cyclization of 2-pyruvoylaminobenzamide to yield acetyl-4(3H)-quinazolidinone. A final reduction of acetyl-4(3H)-quinazolidinone catalyzed by the oxidoreductase chry4 would result in chrysogine. The chain is Short-chain dehydrogenase chry4 from Gibberella zeae (strain ATCC MYA-4620 / CBS 123657 / FGSC 9075 / NRRL 31084 / PH-1) (Wheat head blight fungus).